Consider the following 596-residue polypeptide: DNA primase (596 aa).

The segment at 41–65 adopts a CHC2-type zinc-finger fold; it reads CPFHHEKTPSFSVSQDKQIYKCFGC. The Toprim domain maps to 255-336; sequence DTIIIVEGYM…DIKIIKIPDG (82 aa). Glutamate 261, aspartate 305, and aspartate 307 together coordinate Mg(2+).

It belongs to the DnaG primase family. In terms of assembly, monomer. Interacts with DnaB. It depends on Zn(2+) as a cofactor. Mg(2+) serves as cofactor.

The catalysed reaction is ssDNA + n NTP = ssDNA/pppN(pN)n-1 hybrid + (n-1) diphosphate.. Functionally, RNA polymerase that catalyzes the synthesis of short RNA molecules used as primers for DNA polymerase during DNA replication. This chain is DNA primase, found in Clostridium acetobutylicum (strain ATCC 824 / DSM 792 / JCM 1419 / IAM 19013 / LMG 5710 / NBRC 13948 / NRRL B-527 / VKM B-1787 / 2291 / W).